A 214-amino-acid polypeptide reads, in one-letter code: Osteoclast-stimulating factor 1 (214 aa).

Residues 12–71 (GQVKVFRALFTFDPRTPDELYFEEGDILYISDTSDTNWWKGTCRGRTGLIPSNYVAEQAE) form the SH3 domain. ANK repeat units follow at residues 72–101 (TIDH…GING), 105–135 (AGNT…ELNQ), and 139–168 (LGDT…RTDI).

As to expression, ubiquitously expressed.

It is found in the cytoplasm. Its function is as follows. Induces bone resorption, acting probably through a signaling cascade which results in the secretion of factor(s) enhancing osteoclast formation and activity. The polypeptide is Osteoclast-stimulating factor 1 (ostf1) (Monopterus albus (Swamp eel)).